The following is a 446-amino-acid chain: B3 domain-containing protein REM12 (446 aa).

Residues 1 to 46 are disordered; it reads MVLNSSDLGPSRCDIRDLPAPSSTNDQGKTELARKKKVKRSNTEIE. 2 consecutive DNA-binding regions (TF-B3) follow at residues 56 to 153 and 193 to 289; these read CFVA…FCST and FMTL…VNTQ. The tract at residues 295-334 is disordered; sequence SQQGECSRDSEKESSICAEPSRGNKKWKATNNRKERRDSS. A DNA-binding region (TF-B3 3) is located at residues 341 to 435; that stretch reads YVTLTLTPED…TTPVFKFCSN (95 aa).

It is found in the nucleus. The protein is B3 domain-containing protein REM12 (REM12) of Arabidopsis thaliana (Mouse-ear cress).